Consider the following 539-residue polypeptide: GMP synthase [glutamine-hydrolyzing] (539 aa).

The region spanning 4-202 (KILILDFGSQ…VLQIAGAKPD (199 aa)) is the Glutamine amidotransferase type-1 domain. The active-site Nucleophile is the C81. Active-site residues include H176 and E178. A GMPS ATP-PPase domain is found at 203-395 (WIMKNHIEEA…LGLPPEMVYR (193 aa)). An ATP-binding site is contributed by 230–236 (SGGVDSS).

In terms of assembly, homodimer.

The enzyme catalyses XMP + L-glutamine + ATP + H2O = GMP + L-glutamate + AMP + diphosphate + 2 H(+). Its pathway is purine metabolism; GMP biosynthesis; GMP from XMP (L-Gln route): step 1/1. Its function is as follows. Catalyzes the synthesis of GMP from XMP. The polypeptide is GMP synthase [glutamine-hydrolyzing] (Burkholderia cenocepacia (strain ATCC BAA-245 / DSM 16553 / LMG 16656 / NCTC 13227 / J2315 / CF5610) (Burkholderia cepacia (strain J2315))).